A 72-amino-acid chain; its full sequence is Dermaseptin AA-3-4 (72 aa).

Positions 1–22 (MAFLKKSLFLVLFLGLVSLSIC) are cleaved as a signal peptide. The propeptide occupies 23-43 (DEEKRENEDEEEQEDDEQSEE). Residues 24–45 (EEKRENEDEEEQEDDEQSEEKR) form a disordered region. Over residues 30 to 41 (EDEEEQEDDEQS) the composition is skewed to acidic residues.

The protein belongs to the frog skin active peptide (FSAP) family. As to expression, expressed by the skin glands.

The protein localises to the secreted. In terms of biological role, possesses a potent antimicrobial activity against Gram-positive and Gram-negative bacteria. Probably acts by disturbing membrane functions with its amphipathic structure. This is Dermaseptin AA-3-4 from Agalychnis annae (Blue-sided leaf frog).